The following is a 402-amino-acid chain: Tyrosine--tRNA ligase (402 aa).

The short motif at 48–57 (PSRPDLHLGH) is the 'HIGH' region element. A 'KMSKS' region motif is present at residues 232–236 (KMSKS). Position 235 (lysine 235) interacts with ATP. The S4 RNA-binding domain occupies 339 to 402 (MPIIDLLTLL…KRKFFKIRSK (64 aa)).

This sequence belongs to the class-I aminoacyl-tRNA synthetase family. TyrS type 2 subfamily. Homodimer.

It is found in the cytoplasm. The enzyme catalyses tRNA(Tyr) + L-tyrosine + ATP = L-tyrosyl-tRNA(Tyr) + AMP + diphosphate + H(+). Its function is as follows. Catalyzes the attachment of tyrosine to tRNA(Tyr) in a two-step reaction: tyrosine is first activated by ATP to form Tyr-AMP and then transferred to the acceptor end of tRNA(Tyr). In Chlorobium chlorochromatii (strain CaD3), this protein is Tyrosine--tRNA ligase.